The following is a 101-amino-acid chain: Large ribosomal subunit protein uL23 (101 aa).

Belongs to the universal ribosomal protein uL23 family. In terms of assembly, part of the 50S ribosomal subunit. Contacts protein L29, and trigger factor when it is bound to the ribosome.

Its function is as follows. One of the early assembly proteins it binds 23S rRNA. One of the proteins that surrounds the polypeptide exit tunnel on the outside of the ribosome. Forms the main docking site for trigger factor binding to the ribosome. This Histophilus somni (strain 129Pt) (Haemophilus somnus) protein is Large ribosomal subunit protein uL23.